The primary structure comprises 161 residues: Large ribosomal subunit protein uL11 (161 aa).

Belongs to the universal ribosomal protein uL11 family. Part of the ribosomal stalk of the 50S ribosomal subunit. Interacts with L10 and the large rRNA to form the base of the stalk. L10 forms an elongated spine to which L12 dimers bind in a sequential fashion forming a multimeric L10(L12)X complex.

Functionally, forms part of the ribosomal stalk which helps the ribosome interact with GTP-bound translation factors. The sequence is that of Large ribosomal subunit protein uL11 from Methanosarcina barkeri (strain Fusaro / DSM 804).